We begin with the raw amino-acid sequence, 374 residues long: DNA replication and repair protein RecF (374 aa).

Position 34-41 (34-41 (GDNGAGKT)) interacts with ATP.

It belongs to the RecF family.

Its subcellular location is the cytoplasm. Functionally, the RecF protein is involved in DNA metabolism; it is required for DNA replication and normal SOS inducibility. RecF binds preferentially to single-stranded, linear DNA. It also seems to bind ATP. The polypeptide is DNA replication and repair protein RecF (Rhizobium leguminosarum bv. trifolii (strain WSM2304)).